The following is a 739-amino-acid chain: Poly(A) polymerase alpha (739 aa).

The span at 1–17 (MPFPVTTQGSQQTQPPQ) shows a compositional bias: low complexity. Positions 1–23 (MPFPVTTQGSQQTQPPQKHYGIT) are disordered. Phosphoserine occurs at positions 10 and 24. ATP is bound by residues 100-102 (FGS), threonine 109, 113-115 (DID), aspartate 167, lysine 228, tyrosine 237, and 246-247 (GV). Mg(2+) is bound by residues aspartate 113, aspartate 115, and aspartate 167. Glycyl lysine isopeptide (Lys-Gly) (interchain with G-Cter in SUMO) cross-links involve residues lysine 444, lysine 445, lysine 506, and lysine 507. The short motif at 490 to 507 (RKQLHQLLPSHVLQKKKK) is the Nuclear localization signal 1 element. Disordered regions lie at residues 501 to 565 (VLQK…AVTA) and 580 to 700 (QINS…TIQT). The interval 508-643 (HSTEGVKLTP…AKIPNPIVGV (136 aa)) is ser/Thr-rich. Residues 518 to 534 (LNDSSLDLSMDSDNSMS) are compositionally biased toward low complexity. Positions 535 to 557 (VPSPTSAMKTSPLNSSGSSQGRN) are enriched in polar residues. Serine 537 carries the post-translational modification Phosphoserine; by MAPK. At serine 558 the chain carries Phosphoserine. The span at 583–594 (SSESSGGTSSES) shows a compositional bias: low complexity. Polar residues predominate over residues 595 to 604 (IPQTATQPAI). Over residues 611 to 620 (TVSRVVSSTR) the composition is skewed to low complexity. 2 positions are modified to N6-acetyllysine: lysine 635 and lysine 644. Positions 644–659 (KRTSSPHKEESPKKTK) match the Nuclear localization signal 2 motif. Composition is skewed to basic and acidic residues over residues 649–660 (PHKEESPKKTKT) and 676–686 (GHDKTETKEQL). The tract at residues 671 to 739 (CLALSGHDKT…KNSIKLRLNR (69 aa)) is required for interaction with NUDT21. Residues 688–700 (TETSTTQSETIQT) are compositionally biased toward low complexity. The residue at position 730 (lysine 730) is an N6-acetyllysine; alternate. Lysine 730 participates in a covalent cross-link: Glycyl lysine isopeptide (Lys-Gly) (interchain with G-Cter in SUMO); alternate. Serine 732 is subject to Phosphoserine. An N6-acetyllysine; alternate modification is found at lysine 734. A Glycyl lysine isopeptide (Lys-Gly) (interchain with G-Cter in SUMO); alternate cross-link involves residue lysine 734.

This sequence belongs to the poly(A) polymerase family. In terms of assembly, monomer. Found in a complex with CPSF1, FIP1L1 and PAPOLA. Interacts with AHCYL1 and FIP1L1; the interaction with AHCYL1 seems to increase interaction with FIP1L1. Interacts with NUDT21; the interaction is diminished by acetylation. Interacts with KPNB1; the interaction promotes PAP nuclear import and is inhibited by acetylation of PAP. It depends on Mg(2+) as a cofactor. Mn(2+) is required as a cofactor. Polysumoylated. Varying sumoylation depending on tissue- and cell-type. Highly sumoylated in bladder and NIH 3T3 cells. Sumoylation is required for nuclear localization and enhances PAP stability. Desumoylated by SENP1. Inhibits polymerase activity. Post-translationally, hyperphosphorylation on multiple CDK2 consensus and non-consensus sites in the C-terminal Ser/Thr-rich region represses PAP activity in late M-phase. Phosphorylation/dephosphorylation may regulate the interaction between PAP and CPSF. In terms of processing, acetylated in the C-terminus. Acetylation decreases interaction with NUDT21 and KPNB1, and inhibits nuclear localization through inhibiting binding to the importin alpha/beta complex.

The protein resides in the nucleus. The enzyme catalyses RNA(n) + ATP = RNA(n)-3'-adenine ribonucleotide + diphosphate. Functionally, polymerase that creates the 3'-poly(A) tail of mRNA's. Also required for the endoribonucleolytic cleavage reaction at some polyadenylation sites. May acquire specificity through interaction with a cleavage and polyadenylation specificity factor (CPSF) at its C-terminus. In Bos taurus (Bovine), this protein is Poly(A) polymerase alpha (PAPOLA).